The sequence spans 786 residues: Pentatricopeptide repeat-containing protein At2g22070 (786 aa).

PPR repeat units follow at residues Ser-48–Arg-78, Thr-79–Arg-109, Asp-110–Pro-144, Thr-145–Gly-179, Asn-180–Ser-214, Trp-215–Arg-241, Asp-242–Ser-276, Asp-278–Ile-312, Ser-313–Ile-347, Phe-350–Arg-376, Asp-377–Pro-411, Asn-412–Tyr-446, Ser-447–Glu-477, Asp-479–Pro-513, Asp-514–Ile-548, and Thr-550–Glu-580. Positions Thr-585–Lys-660 are type E motif. Residues His-661–Lys-691 are type E(+) motif. Residues Lys-692 to Trp-786 are type DYW motif.

It belongs to the PPR family. PCMP-H subfamily.

This Arabidopsis thaliana (Mouse-ear cress) protein is Pentatricopeptide repeat-containing protein At2g22070 (PCMP-H41).